Here is a 123-residue protein sequence, read N- to C-terminus: Small ribosomal subunit protein uS12 (123 aa).

Aspartate 89 carries the 3-methylthioaspartic acid modification.

This sequence belongs to the universal ribosomal protein uS12 family. In terms of assembly, part of the 30S ribosomal subunit. Contacts proteins S8 and S17. May interact with IF1 in the 30S initiation complex.

Functionally, with S4 and S5 plays an important role in translational accuracy. In terms of biological role, interacts with and stabilizes bases of the 16S rRNA that are involved in tRNA selection in the A site and with the mRNA backbone. Located at the interface of the 30S and 50S subunits, it traverses the body of the 30S subunit contacting proteins on the other side and probably holding the rRNA structure together. The combined cluster of proteins S8, S12 and S17 appears to hold together the shoulder and platform of the 30S subunit. In Methylorubrum extorquens (strain PA1) (Methylobacterium extorquens), this protein is Small ribosomal subunit protein uS12.